A 255-amino-acid chain; its full sequence is 5-oxoprolinase subunit A (255 aa).

It belongs to the LamB/PxpA family. As to quaternary structure, forms a complex composed of PxpA, PxpB and PxpC.

The enzyme catalyses 5-oxo-L-proline + ATP + 2 H2O = L-glutamate + ADP + phosphate + H(+). In terms of biological role, catalyzes the cleavage of 5-oxoproline to form L-glutamate coupled to the hydrolysis of ATP to ADP and inorganic phosphate. This is 5-oxoprolinase subunit A from Campylobacter jejuni subsp. jejuni serotype O:2 (strain ATCC 700819 / NCTC 11168).